Consider the following 91-residue polypeptide: Small ribosomal subunit protein uS17 (91 aa).

This sequence belongs to the universal ribosomal protein uS17 family. As to quaternary structure, part of the 30S ribosomal subunit.

In terms of biological role, one of the primary rRNA binding proteins, it binds specifically to the 5'-end of 16S ribosomal RNA. The polypeptide is Small ribosomal subunit protein uS17 (Salinispora tropica (strain ATCC BAA-916 / DSM 44818 / JCM 13857 / NBRC 105044 / CNB-440)).